Here is a 383-residue protein sequence, read N- to C-terminus: uncharacterized protein (383 aa).

Disordered stretches follow at residues 27-66 (ENNNTNNNTNSNTNSNNKNNNNNNNNKSNNKKQNNNNKKP) and 242-281 (LITTKDSNEQTSSSSSSSTAITTNTNCSNSKSSSQPITRR). Low complexity-rich tracts occupy residues 28-63 (NNNTNNNTNSNTNSNNKNNNNNNNNKSNNKKQNNNN) and 242-275 (LITTKDSNEQTSSSSSSSTAITTNTNCSNSKSSS).

This is an uncharacterized protein from Dictyostelium discoideum (Social amoeba).